The chain runs to 631 residues: Anthrax toxin receptor-like (631 aa).

The N-terminal stretch at 1 to 27 is a signal peptide; it reads MGSHESLGPYFLVFLLLLLLPPPLFRA. The Extracellular portion of the chain corresponds to 28-353; sequence GSLRYHGPDW…TSTTCGIFRN (326 aa). Residues 76–246 enclose the VWFA domain; that stretch reads DLYFILDKSG…KALRSTIDAL (171 aa). Positions 84, 86, and 150 each coordinate a divalent metal cation. Residues 354 to 374 traverse the membrane as a helical segment; the sequence is WLYFVPLLLLVPLLLCCVWRL. Over 375-631 the chain is Cytoplasmic; the sequence is CRKQTVKEPP…LSLPPSEPNF (257 aa). Residues 382-413 form a disordered region; sequence EPPPVQKPEKEPEQEKPPSPPPPPPPPPPPLP. A compositionally biased stretch (basic and acidic residues) spans 388–397; that stretch reads KPEKEPEQEK. Residues 398–413 show a composition bias toward pro residues; the sequence is PPSPPPPPPPPPPPLP.

This sequence belongs to the ATR family.

The protein resides in the membrane. The chain is Anthrax toxin receptor-like (ANTXRL) from Homo sapiens (Human).